Reading from the N-terminus, the 435-residue chain is T-box transcription factor T (435 aa).

The segment at residues 51 to 219 (LWLRFKELTN…YNPFAKAFLD (169 aa)) is a DNA-binding region (T-box). The interval 279-308 (YPTLRSHRSSPYPSPYAHRNNSPTYSDNSP) is disordered. A compositionally biased stretch (polar residues) spans 297–308 (RNNSPTYSDNSP).

In terms of assembly, monomer. Detected in testis, but not in other, normal tissues. Detected in lung tumors (at protein level).

The protein localises to the nucleus. Functionally, involved in the transcriptional regulation of genes required for mesoderm formation and differentiation. Binds to a palindromic T site 5'-TTCACACCTAGGTGTGAA-3' DNA sequence and activates gene transcription when bound to such a site. The protein is T-box transcription factor T of Homo sapiens (Human).